A 284-amino-acid chain; its full sequence is MYVVSTKQMLNNAQRGGYAVPAFNIHNLETMQVVVETAASMHAPVIIAGTPGTFTHAGTENLMALVSAMAKQYHHPLAIHLDHHTKFDDIAQKVRSGVRSVMIDASHLPFAQNISRVKEVVDFCHRFDVSVEAELGQLGGQEDDVQVNEADALYTNPVQAREFAEATGIDSLAVAIGTAHGMYASAPALDFSRLENIRQWVNLPLVLHGASGLSTKDIQQTIKLGICKINVATELKNAFSQALKNYLTEHPEATDPRDYLQSAKFAMRDVVSKVIADCGCEGRA.

Catalysis depends on D82, which acts as the Proton donor. Residues H83 and H180 each coordinate Zn(2+). G181 provides a ligand contact to dihydroxyacetone phosphate. Position 208 (H208) interacts with Zn(2+). Dihydroxyacetone phosphate-binding positions include 209–211 and 230–233; these read GAS and NVAT.

Belongs to the class II fructose-bisphosphate aldolase family. TagBP aldolase GatY subfamily. As to quaternary structure, forms a complex with GatZ. It depends on Zn(2+) as a cofactor.

The enzyme catalyses D-tagatofuranose 1,6-bisphosphate = D-glyceraldehyde 3-phosphate + dihydroxyacetone phosphate. It participates in carbohydrate metabolism; D-tagatose 6-phosphate degradation; D-glyceraldehyde 3-phosphate and glycerone phosphate from D-tagatose 6-phosphate: step 2/2. Functionally, catalytic subunit of the tagatose-1,6-bisphosphate aldolase GatYZ, which catalyzes the reversible aldol condensation of dihydroxyacetone phosphate (DHAP or glycerone-phosphate) with glyceraldehyde 3-phosphate (G3P) to produce tagatose 1,6-bisphosphate (TBP). Requires GatZ subunit for full activity and stability. Is involved in the catabolism of galactitol. The sequence is that of D-tagatose-1,6-bisphosphate aldolase subunit GatY from Escherichia coli (strain SMS-3-5 / SECEC).